A 287-amino-acid polypeptide reads, in one-letter code: UPF0098 protein AF_1698 (287 aa).

It belongs to the UPF0098 family.

In Archaeoglobus fulgidus (strain ATCC 49558 / DSM 4304 / JCM 9628 / NBRC 100126 / VC-16), this protein is UPF0098 protein AF_1698.